Consider the following 270-residue polypeptide: 4-hydroxy-tetrahydrodipicolinate reductase (270 aa).

Residues 8–13 (GAAGRM) and Glu34 each bind NAD(+). Arg35 contacts NADP(+). Residues 98 to 100 (GST) and 122 to 125 (SPNM) each bind NAD(+). Catalysis depends on His155, which acts as the Proton donor/acceptor. His156 is a (S)-2,3,4,5-tetrahydrodipicolinate binding site. Lys159 functions as the Proton donor in the catalytic mechanism. 165 to 166 (GT) serves as a coordination point for (S)-2,3,4,5-tetrahydrodipicolinate.

This sequence belongs to the DapB family.

Its subcellular location is the cytoplasm. It carries out the reaction (S)-2,3,4,5-tetrahydrodipicolinate + NAD(+) + H2O = (2S,4S)-4-hydroxy-2,3,4,5-tetrahydrodipicolinate + NADH + H(+). The enzyme catalyses (S)-2,3,4,5-tetrahydrodipicolinate + NADP(+) + H2O = (2S,4S)-4-hydroxy-2,3,4,5-tetrahydrodipicolinate + NADPH + H(+). It participates in amino-acid biosynthesis; L-lysine biosynthesis via DAP pathway; (S)-tetrahydrodipicolinate from L-aspartate: step 4/4. Its function is as follows. Catalyzes the conversion of 4-hydroxy-tetrahydrodipicolinate (HTPA) to tetrahydrodipicolinate. The sequence is that of 4-hydroxy-tetrahydrodipicolinate reductase from Anaeromyxobacter dehalogenans (strain 2CP-1 / ATCC BAA-258).